Here is a 190-residue protein sequence, read N- to C-terminus: CASP-like protein 2U2 (190 aa).

The Cytoplasmic portion of the chain corresponds to 1-10; it reads MGEKMQGFQG. The chain crosses the membrane as a helical span at residues 11–31; that stretch reads WSIGIRFLTSCVSIASLILLL. Residues 32 to 59 are Extracellular-facing; it reads KSKQTVQVSVGLDYVTQQVKYSDTSAFV. The chain crosses the membrane as a helical span at residues 60-80; it reads YLVFSDILVAVYCIVVLVGLI. Residues 81–94 lie on the Cytoplasmic side of the membrane; that stretch reads PAALGKSHPGKAGQ. The chain crosses the membrane as a helical span at residues 95–115; sequence WAIFIFDQVLAYVLLAAASSA. The Extracellular segment spans residues 116–144; it reads TEVAYLADKGMAKTSWEAVCPRFAHFCHT. A helical membrane pass occupies residues 145-165; the sequence is VMASISLSFVAVLLLALLAVV. Over 166–190 the chain is Cytoplasmic; the sequence is SASGLFGRFYRRPLFAVKMRHNTLI.

It belongs to the Casparian strip membrane proteins (CASP) family. In terms of assembly, homodimer and heterodimers.

Its subcellular location is the cell membrane. This chain is CASP-like protein 2U2, found in Pteridium aquilinum subsp. aquilinum (Bracken fern).